A 380-amino-acid polypeptide reads, in one-letter code: MRNCKMARVASVLGLVMLSVALLILSLISYVSLKKENIFTTPKYASPGAPRMYMFHAGFRSQFALKFLDQSFVPITNSLTHELQEKPSKWTFNRTAFLHQRQEILQHVDVIKNFSLTKSSVRIGQLMHYDYSSHKYVFSISNNFRSLLPDVSPIMNKRYNVCAVVGNSGILTGSQCGQEIDKSDFVFRCNFAPTEAFHKDVGRKTNLTTFNPSILEKYYNNLLTIQDRNNFFLSLKKLDGAILWIPAFFFHTSATVTRTLVDFFVEHRGQLKVQLAWPGNIMQHVNRYWKNKHLSPKRLSTGILMYTLASAICEEIHLYGFWPFGFDPNTREDLPYHYYDKKGTKFTTKWQESHQLPAEFQLLYRMHGEGLTKLTLSHCA.

Topologically, residues 1–17 (MRNCKMARVASVLGLVM) are cytoplasmic. Residues 18 to 33 (LSVALLILSLISYVSL) form a helical; Signal-anchor for type II membrane protein membrane-spanning segment. Residues 34–380 (KKENIFTTPK…LTKLTLSHCA (347 aa)) lie on the Lumenal side of the membrane. N-linked (GlcNAc...) asparagine glycosylation is found at Asn-93 and Asn-113. 2 disulfide bridges follow: Cys-162–Cys-313 and Cys-176–Cys-379. The CMP-N-acetyl-beta-neuraminate site is built by Asn-167 and Asn-190. N-linked (GlcNAc...) asparagine glycosylation occurs at Asn-206. Residues Ser-300, Thr-301, Gly-302, Trp-322, Tyr-336, and His-337 each contribute to the CMP-N-acetyl-beta-neuraminate site. The active-site Proton donor/acceptor is the His-354.

Belongs to the glycosyltransferase 29 family. In terms of assembly, homodimer. In terms of tissue distribution, expressed in neurons in brain with higher expression in the striatum than in the hippocampus, cortex, and cerebellum (at protein level). Expressed in testes.

The protein resides in the golgi apparatus membrane. It catalyses the reaction a ganglioside GM3 (d18:1(4E)) + CMP-N-acetyl-beta-neuraminate = a ganglioside GD3 (d18:1(4E)) + CMP + H(+). The enzyme catalyses a ganglioside GM3 + CMP-N-acetyl-beta-neuraminate = a ganglioside GD3 + CMP + H(+). The catalysed reaction is an N-acetyl-alpha-neuraminyl-(2-&gt;3)-beta-D-galactosyl derivative + CMP-N-acetyl-beta-neuraminate = an N-acetyl-alpha-neuraminyl-(2-&gt;8)-N-acetyl-alpha-neuraminyl-(2-&gt;3)-beta-D-galactosyl derivative + CMP + H(+). It carries out the reaction an N-acetyl-alpha-neuraminyl-(2-&gt;3)-beta-D-galactosyl-(1-&gt;4)-N-acetyl-beta-D-glucosaminyl derivative + CMP-N-acetyl-beta-neuraminate = an alpha-Neu5Ac-(2-&gt;8)-alpha-Neu5Ac-(2-&gt;3)-beta-D-Gal-(1-&gt;4)-beta-D-GlcNAc derivative + CMP + H(+). It functions in the pathway protein modification; protein glycosylation. In terms of biological role, catalyzes the transfer of sialic acid from a CMP-linked sialic acid donor onto a terminal alpha-2,3-, alpha-2,6-, or alpha-2,8-linked sialic acid of an acceptor, such as N-linked oligosaccharides of glycoproteins and glycolipids through alpha-2,8-linkages. Forms oligosialic and polysialic acid on various sialylated N-acetyllactosamine oligosaccharides of glycoproteins, including FETUB N-glycans, a2-HS-glycoprotein (AHSG) and alpha 2,3-sialylated glycosphingolipids, such as alpha 2,3-sialylparagloboside and ganglioside GM3 and to a lesser extent NCAM1 N-glycans. However, it is much more specific to N-linked oligosaccharides of glycoproteins than glycosphingolipids. 2,3-sialylparagloboside served as the best acceptor substrate among the glycolipids. alpha-Neu5Ac-(2-&gt;8)-alpha-Neu5Ac-(2-&gt;3)-beta-D-Gal-(1-&gt;4)-6S-D-GlcNAc and monosialyl and disialyl N-acetyllactosamines are the best acceptor substrates among glycoproteins. May play critical role in the striatum by mediating the formation of disialylated and trisialylated terminal glycotopes on N- and O-glycans of specific striatal proteins, regulating their distribution in lipid rafts, affecting their interaction with other binding partners, and subsequently modulating striatal functions. This Mus musculus (Mouse) protein is Alpha-N-acetylneuraminate alpha-2,8-sialyltransferase ST8SIA3.